Consider the following 914-residue polypeptide: TRPM8 channel-associated factor 3 (914 aa).

In terms of domain architecture, Peptidase M60 spans 533–832; that stretch reads NSWVSTGLYL…TYLQLQEGFG (300 aa).

The protein belongs to the TCAF family.

Its function is as follows. May play a role in the regulation of the cation channel TRPM8 activity. In Rattus norvegicus (Rat), this protein is TRPM8 channel-associated factor 3.